The chain runs to 201 residues: Dephospho-CoA kinase (201 aa).

In terms of domain architecture, DPCK spans 3-201; the sequence is ILGLTGGIGS…QIDSRVGCKI (199 aa). Position 11-16 (11-16) interacts with ATP; it reads GSGKSL.

This sequence belongs to the CoaE family.

It is found in the cytoplasm. The catalysed reaction is 3'-dephospho-CoA + ATP = ADP + CoA + H(+). It participates in cofactor biosynthesis; coenzyme A biosynthesis; CoA from (R)-pantothenate: step 5/5. Its function is as follows. Catalyzes the phosphorylation of the 3'-hydroxyl group of dephosphocoenzyme A to form coenzyme A. The polypeptide is Dephospho-CoA kinase (Ehrlichia ruminantium (strain Welgevonden)).